Here is a 202-residue protein sequence, read N- to C-terminus: Small ribosomal subunit protein uS4c (202 aa).

The S4 RNA-binding domain occupies 90–158; the sequence is MRLDNIIFRL…MKRSRDSYEK (69 aa).

Belongs to the universal ribosomal protein uS4 family. In terms of assembly, part of the 30S ribosomal subunit. Contacts protein S5. The interaction surface between S4 and S5 is involved in control of translational fidelity.

It is found in the plastid. It localises to the chloroplast. One of the primary rRNA binding proteins, it binds directly to 16S rRNA where it nucleates assembly of the body of the 30S subunit. Its function is as follows. With S5 and S12 plays an important role in translational accuracy. This Anthoceros angustus (Hornwort) protein is Small ribosomal subunit protein uS4c (rps4).